A 108-amino-acid chain; its full sequence is Replication initiation control protein YabA (108 aa).

Zn(2+) contacts are provided by histidine 83, cysteine 85, cysteine 99, and cysteine 102.

The protein belongs to the YabA family. As to quaternary structure, homotetramer. Interacts with both DnaA and DnaN, acting as a bridge between these two proteins. The cofactor is Zn(2+).

It is found in the cytoplasm. Its subcellular location is the nucleoid. Functionally, involved in control of chromosome replication initiation. Inhibits the cooperative binding of DnaA to the oriC region, thus negatively regulating initiation of chromosome replication. Inhibits the ability of DnaA-ATP to form a helix on DNA; does not disassemble preformed DnaA-DNA helices. Decreases the residence time of DnaA on the chromosome at its binding sites (oriC, replication forks and promoter-binding sites). Tethers DnaA to the replication machinery via the DNA polymerase beta sliding clamp subunit (dnaN). Associates with oriC and other DnaA targets on the chromosome in a DnaA-dependent manner. The chain is Replication initiation control protein YabA from Lactococcus lactis subsp. cremoris (strain SK11).